We begin with the raw amino-acid sequence, 198 residues long: Protein ORFi in retron Ec67 (198 aa).

It belongs to the CI repressor protein family.

This Escherichia coli protein is Protein ORFi in retron Ec67.